A 758-amino-acid chain; its full sequence is Zinc finger protein VAR3, chloroplastic (758 aa).

Residues 122-502 (FPGFPDELLR…PKEETQIGLI (381 aa)) form a 3 X approximate repeat region. RanBP2-type zinc fingers lie at residues 276–305 (KRGD…ARPK) and 308–338 (LTGS…KRPR). Repeat 1 spans residues 368–415 (RWLSKVAQGGSDANSVDTDEDFPEIMPLRKGVNRYVVSTRKPPLERRL). 5 disordered regions span residues 410-470 (PLER…RFES), 512-545 (GGNQ…SEEP), 572-606 (EKMP…DSDF), 629-654 (TLPA…INKS), and 727-758 (KRKT…KGDK). Composition is skewed to basic and acidic residues over residues 457 to 469 (RSDD…RRFE), 519 to 545 (QEDK…SEEP), and 572 to 581 (EKMPMRKGEN). Residues 547–596 (RWFKRVTELHNVSDLESAIPQEISPEKMPMRKGENRFVVSRKKDRSLTSP) form repeat 2. Residues 688-736 (RWFKRVAEIKNISELSEIPDEDFPSIMPMRKGVNRFVVSKRKTPLERRL) form repeat 3.

Interacts in vitro with the chloroplast-located protein CCD4/NCED4. Homodimer. Interacts with ORRM1. Interacts with PCMP-H51/CRR28 and PCMP-H12/OTP82. Interacts with ORRM6. Weakly expressed in leaves and roots.

Its subcellular location is the plastid. It is found in the chloroplast. In terms of biological role, probable component of some protein complex required for chloroplast and palisade cell development. Involved in C-to-U editing of chloroplastic RNA. Controls a large number of chloroplastic editing sites. Binds the editing recognition trans-factors PCMP-H51/CRR28 and PCMP-H12/OTP82. This Arabidopsis thaliana (Mouse-ear cress) protein is Zinc finger protein VAR3, chloroplastic.